The primary structure comprises 428 residues: UDP-N-acetylglucosamine 1-carboxyvinyltransferase (428 aa).

Lys25–Asn26 contributes to the phosphoenolpyruvate binding site. Residue Arg102 coordinates UDP-N-acetyl-alpha-D-glucosamine. Residue Cys126 is the Proton donor of the active site. Residue Cys126 is modified to 2-(S-cysteinyl)pyruvic acid O-phosphothioketal. 2 residues coordinate UDP-N-acetyl-alpha-D-glucosamine: Asp316 and Val338.

It belongs to the EPSP synthase family. MurA subfamily.

It is found in the cytoplasm. The catalysed reaction is phosphoenolpyruvate + UDP-N-acetyl-alpha-D-glucosamine = UDP-N-acetyl-3-O-(1-carboxyvinyl)-alpha-D-glucosamine + phosphate. It participates in cell wall biogenesis; peptidoglycan biosynthesis. In terms of biological role, cell wall formation. Adds enolpyruvyl to UDP-N-acetylglucosamine. The chain is UDP-N-acetylglucosamine 1-carboxyvinyltransferase from Anaplasma marginale (strain Florida).